Reading from the N-terminus, the 384-residue chain is 3,7-dimethylxanthine N-methyltransferase 1 (384 aa).

S-adenosyl-L-homocysteine is bound by residues tyrosine 18, cysteine 61, asparagine 66, aspartate 100, leucine 101, serine 139, phenylalanine 140, and cysteine 156. Residue tyrosine 157 coordinates theobromine. Cysteine 158 contributes to the S-adenosyl-L-homocysteine binding site. 2 residues coordinate theobromine: histidine 160 and tryptophan 161. Asparagine 178 contributes to the Mg(2+) binding site. Serine 237 is a theobromine binding site. The Mg(2+) site is built by aspartate 260, phenylalanine 262, and asparagine 263. Tyrosine 368 contributes to the theobromine binding site.

The protein belongs to the methyltransferase superfamily. Type-7 methyltransferase family. Mg(2+) serves as cofactor. As to expression, highly expressed in developing endosperm and immature fruits (grains). Detected in young leaves and flower buds, but not in mature fruits.

The enzyme catalyses theobromine + S-adenosyl-L-methionine = caffeine + S-adenosyl-L-homocysteine + H(+). It carries out the reaction 1,7-dimethylxanthine + S-adenosyl-L-methionine = caffeine + S-adenosyl-L-homocysteine + H(+). It catalyses the reaction 7-methylxanthine + S-adenosyl-L-methionine = theobromine + S-adenosyl-L-homocysteine + H(+). It functions in the pathway alkaloid biosynthesis. Involved in the biosynthesis of caffeine. Catalyzes the conversion of 7-methylxanthine to caffeine, likely via theobromine as an intermediate. This chain is 3,7-dimethylxanthine N-methyltransferase 1, found in Coffea arabica (Arabian coffee).